We begin with the raw amino-acid sequence, 89 residues long: Small ribosomal subunit protein uS17 (89 aa).

Belongs to the universal ribosomal protein uS17 family. Part of the 30S ribosomal subunit.

One of the primary rRNA binding proteins, it binds specifically to the 5'-end of 16S ribosomal RNA. In Polaromonas sp. (strain JS666 / ATCC BAA-500), this protein is Small ribosomal subunit protein uS17.